The chain runs to 404 residues: Tryptophan synthase beta chain (404 aa).

N6-(pyridoxal phosphate)lysine is present on K94.

The protein belongs to the TrpB family. Tetramer of two alpha and two beta chains. Pyridoxal 5'-phosphate is required as a cofactor.

The enzyme catalyses (1S,2R)-1-C-(indol-3-yl)glycerol 3-phosphate + L-serine = D-glyceraldehyde 3-phosphate + L-tryptophan + H2O. Its pathway is amino-acid biosynthesis; L-tryptophan biosynthesis; L-tryptophan from chorismate: step 5/5. Its function is as follows. The beta subunit is responsible for the synthesis of L-tryptophan from indole and L-serine. The sequence is that of Tryptophan synthase beta chain from Staphylococcus aureus (strain MRSA252).